A 196-amino-acid chain; its full sequence is GTP cyclohydrolase 1 (196 aa).

Zn(2+)-binding residues include C86, H89, and C158.

It belongs to the GTP cyclohydrolase I family. Homomer.

The catalysed reaction is GTP + H2O = 7,8-dihydroneopterin 3'-triphosphate + formate + H(+). It participates in cofactor biosynthesis; 7,8-dihydroneopterin triphosphate biosynthesis; 7,8-dihydroneopterin triphosphate from GTP: step 1/1. In Clostridium botulinum (strain Kyoto / Type A2), this protein is GTP cyclohydrolase 1.